Here is a 177-residue protein sequence, read N- to C-terminus: Adenine phosphoribosyltransferase (177 aa).

This sequence belongs to the purine/pyrimidine phosphoribosyltransferase family. As to quaternary structure, homodimer.

The protein localises to the cytoplasm. It catalyses the reaction AMP + diphosphate = 5-phospho-alpha-D-ribose 1-diphosphate + adenine. The protein operates within purine metabolism; AMP biosynthesis via salvage pathway; AMP from adenine: step 1/1. In terms of biological role, catalyzes a salvage reaction resulting in the formation of AMP, that is energically less costly than de novo synthesis. The chain is Adenine phosphoribosyltransferase from Chlorobium luteolum (strain DSM 273 / BCRC 81028 / 2530) (Pelodictyon luteolum).